The primary structure comprises 86 residues: DNA-directed RNA polymerase subunit Rpo6 (86 aa).

This sequence belongs to the archaeal Rpo6/eukaryotic RPB6 RNA polymerase subunit family. As to quaternary structure, part of the RNA polymerase complex.

It is found in the cytoplasm. The enzyme catalyses RNA(n) + a ribonucleoside 5'-triphosphate = RNA(n+1) + diphosphate. DNA-dependent RNA polymerase (RNAP) catalyzes the transcription of DNA into RNA using the four ribonucleoside triphosphates as substrates. The sequence is that of DNA-directed RNA polymerase subunit Rpo6 from Sulfurisphaera tokodaii (strain DSM 16993 / JCM 10545 / NBRC 100140 / 7) (Sulfolobus tokodaii).